The sequence spans 807 residues: AP-5 complex subunit zeta-1 (807 aa).

Probably part of the adaptor protein complex 5 (AP-5) a tetramer composed of AP5B1, AP5M1, AP5S1 and AP5Z1. Interacts with ZFYVE26 and SPG11.

The protein resides in the cytoplasm. Its subcellular location is the nucleus. As part of AP-5, a probable fifth adaptor protein complex it may be involved in endosomal transport. In Mus musculus (Mouse), this protein is AP-5 complex subunit zeta-1 (Ap5z1).